We begin with the raw amino-acid sequence, 291 residues long: Protein/nucleic acid deglycase HchA (291 aa).

Basic and acidic residues predominate over residues 1-18 (MSNERDTSRTPTPDHAEH). Residues 1–24 (MSNERDTSRTPTPDHAEHNAFFPS) are disordered. The active-site Nucleophile is C188.

It belongs to the peptidase C56 family. HchA subfamily.

It localises to the cytoplasm. It catalyses the reaction N(omega)-(1-hydroxy-2-oxopropyl)-L-arginyl-[protein] + H2O = lactate + L-arginyl-[protein] + H(+). The catalysed reaction is N(6)-(1-hydroxy-2-oxopropyl)-L-lysyl-[protein] + H2O = lactate + L-lysyl-[protein] + H(+). The enzyme catalyses S-(1-hydroxy-2-oxopropyl)-L-cysteinyl-[protein] + H2O = lactate + L-cysteinyl-[protein] + H(+). It carries out the reaction N(omega)-(1-hydroxy-2-oxoethyl)-L-arginyl-[protein] + H2O = L-arginyl-[protein] + glycolate + H(+). It catalyses the reaction N(6)-(1-hydroxy-2-oxoethyl)-L-lysyl-[protein] + H2O = glycolate + L-lysyl-[protein] + H(+). The catalysed reaction is S-(1-hydroxy-2-oxoethyl)-L-cysteinyl-[protein] + H2O = glycolate + L-cysteinyl-[protein] + H(+). The enzyme catalyses N(2)-(1-hydroxy-2-oxopropyl)-dGTP + H2O = lactate + dGTP + H(+). It carries out the reaction N(2)-(1-hydroxy-2-oxopropyl)-GTP + H2O = lactate + GTP + H(+). It catalyses the reaction N(2)-(1-hydroxy-2-oxopropyl)-GDP + H2O = lactate + GDP + H(+). The catalysed reaction is N(2)-(1-hydroxy-2-oxopropyl)-GMP + H2O = lactate + GMP + H(+). The enzyme catalyses N(2)-(1-hydroxy-2-oxoethyl)-dGTP + H2O = dGTP + glycolate + H(+). It carries out the reaction N(2)-(1-hydroxy-2-oxoethyl)-GTP + H2O = glycolate + GTP + H(+). It catalyses the reaction N(2)-(1-hydroxy-2-oxoethyl)-GDP + H2O = glycolate + GDP + H(+). The catalysed reaction is N(2)-(1-hydroxy-2-oxoethyl)-GMP + H2O = glycolate + GMP + H(+). The enzyme catalyses an N(2)-(1-hydroxy-2-oxopropyl)-guanosine in RNA + H2O = a guanosine in RNA + lactate + H(+). It carries out the reaction an N(2)-(1-hydroxy-2-oxopropyl)-2'-deoxyguanosine in DNA + H2O = a 2'-deoxyguanosine in DNA + lactate + H(+). It catalyses the reaction an N(2)-(1-hydroxy-2-oxoethyl)-guanosine in RNA + H2O = a guanosine in RNA + glycolate + H(+). The catalysed reaction is an N(2)-(1-hydroxy-2-oxoethyl)-2'-deoxyguanosine in DNA + H2O = a 2'-deoxyguanosine in DNA + glycolate + H(+). Its function is as follows. Protein and nucleotide deglycase that catalyzes the deglycation of the Maillard adducts formed between amino groups of proteins or nucleotides and reactive carbonyl groups of glyoxals. Thus, functions as a protein deglycase that repairs methylglyoxal- and glyoxal-glycated proteins, and releases repaired proteins and lactate or glycolate, respectively. Deglycates cysteine, arginine and lysine residues in proteins, and thus reactivates these proteins by reversing glycation by glyoxals. Acts on early glycation intermediates (hemithioacetals and aminocarbinols), preventing the formation of Schiff bases and advanced glycation endproducts (AGE). Also functions as a nucleotide deglycase able to repair glycated guanine in the free nucleotide pool (GTP, GDP, GMP, dGTP) and in DNA and RNA. Is thus involved in a major nucleotide repair system named guanine glycation repair (GG repair), dedicated to reversing methylglyoxal and glyoxal damage via nucleotide sanitization and direct nucleic acid repair. Plays an important role in protecting cells from carbonyl stress. The sequence is that of Protein/nucleic acid deglycase HchA from Pseudomonas aeruginosa (strain UCBPP-PA14).